The sequence spans 62 residues: Large ribosomal subunit protein eL37 (62 aa).

4 residues coordinate Zn(2+): C20, C23, C35, and C38. The segment at 20-38 (CRRCGRHAFNVAKGYCAAC) adopts a C4-type zinc-finger fold.

The protein belongs to the eukaryotic ribosomal protein eL37 family. Requires Zn(2+) as cofactor.

Functionally, binds to the 23S rRNA. In Staphylothermus marinus (strain ATCC 43588 / DSM 3639 / JCM 9404 / F1), this protein is Large ribosomal subunit protein eL37.